Reading from the N-terminus, the 378-residue chain is Cytochrome b (378 aa).

Helical transmembrane passes span 34–54 (FGSL…FLAM), 78–99 (WLLR…YLHV), 114–134 (WLIG…GYVL), and 179–199 (FFTF…IHLL). Heme b contacts are provided by His84 and His98. Heme b-binding residues include His183 and His197. An a ubiquinone-binding site is contributed by His202. Transmembrane regions (helical) follow at residues 227–247 (FKDI…VLIS), 289–309 (LGGV…PFYN), 321–341 (INQV…WIGA), and 348–368 (YVLI…VNPL).

Belongs to the cytochrome b family. As to quaternary structure, the main subunits of complex b-c1 are: cytochrome b, cytochrome c1 and the Rieske protein. The cofactor is heme b.

It is found in the mitochondrion inner membrane. Functionally, component of the ubiquinol-cytochrome c reductase complex (complex III or cytochrome b-c1 complex) that is part of the mitochondrial respiratory chain. The b-c1 complex mediates electron transfer from ubiquinol to cytochrome c. Contributes to the generation of a proton gradient across the mitochondrial membrane that is then used for ATP synthesis. In Drosophila simulans (Fruit fly), this protein is Cytochrome b (mt:Cyt-b).